A 648-amino-acid chain; its full sequence is Threonine--tRNA ligase (648 aa).

Residues 1 to 61 (MIKITLPDGS…TTDGSLVLYT (61 aa)) enclose the TGS domain. The segment at 240–539 (DHRKLGKELE…LLEHTAGNFP (300 aa)) is catalytic. 3 residues coordinate Zn(2+): Cys335, His386, and His516.

This sequence belongs to the class-II aminoacyl-tRNA synthetase family. As to quaternary structure, homodimer. Requires Zn(2+) as cofactor.

It is found in the cytoplasm. The enzyme catalyses tRNA(Thr) + L-threonine + ATP = L-threonyl-tRNA(Thr) + AMP + diphosphate + H(+). In terms of biological role, catalyzes the attachment of threonine to tRNA(Thr) in a two-step reaction: L-threonine is first activated by ATP to form Thr-AMP and then transferred to the acceptor end of tRNA(Thr). Also edits incorrectly charged L-seryl-tRNA(Thr). In Flavobacterium psychrophilum (strain ATCC 49511 / DSM 21280 / CIP 103535 / JIP02/86), this protein is Threonine--tRNA ligase.